Reading from the N-terminus, the 117-residue chain is Ribonuclease P protein component (117 aa).

Belongs to the RnpA family. In terms of assembly, consists of a catalytic RNA component (M1 or rnpB) and a protein subunit.

The catalysed reaction is Endonucleolytic cleavage of RNA, removing 5'-extranucleotides from tRNA precursor.. In terms of biological role, RNaseP catalyzes the removal of the 5'-leader sequence from pre-tRNA to produce the mature 5'-terminus. It can also cleave other RNA substrates such as 4.5S RNA. The protein component plays an auxiliary but essential role in vivo by binding to the 5'-leader sequence and broadening the substrate specificity of the ribozyme. This Thermotoga petrophila (strain ATCC BAA-488 / DSM 13995 / JCM 10881 / RKU-1) protein is Ribonuclease P protein component.